The sequence spans 259 residues: Large ribosomal subunit protein uL3c (259 aa).

A chloroplast-targeting transit peptide spans 1–37 (LKTTPLTLRSPFLHRLPLRALKTHKPTSLHISKSSIS). The interval 176–211 (MTHGSKSHRQLGSIGAGTTPGRVYKGKKMPGRMGGT) is disordered. The segment covering 199-211 (YKGKKMPGRMGGT) has biased composition (basic residues).

Belongs to the universal ribosomal protein uL3 family. Part of the 50S ribosomal subunit.

Its subcellular location is the plastid. It localises to the chloroplast. In terms of biological role, one of the primary rRNA binding proteins, it binds directly near the 3'-end of the 23S rRNA, where it nucleates assembly of the 50S subunit. This is Large ribosomal subunit protein uL3c (RPL3) from Nicotiana tabacum (Common tobacco).